Consider the following 218-residue polypeptide: MNIIDLGLIRYAEADALQRARLEEVAAGAEETLYLLEHHPVITLGRNGGGENLHVGREWLATQGIDLVQSSRGGNITCHFPGQLVAYPVFRVAKRPGGLRQMFHDLEEVVITTLAHFGLSAARWEGRPGVWIENRKICSIGMAVRRWTSYHGFALNVGRDLSLFEMITLCGLPDAQATSLYRELGGDAPTMQEVKDVCARQFRAIFADSTVAAGQAAL.

Residues 27–210 (AGAEETLYLL…QFRAIFADST (184 aa)) form the BPL/LPL catalytic domain. Substrate is bound by residues 72-79 (RGGNITCH), 139-141 (SIG), and 152-154 (GFA). The Acyl-thioester intermediate role is filled by cysteine 170.

Belongs to the LipB family.

The protein localises to the cytoplasm. It carries out the reaction octanoyl-[ACP] + L-lysyl-[protein] = N(6)-octanoyl-L-lysyl-[protein] + holo-[ACP] + H(+). It participates in protein modification; protein lipoylation via endogenous pathway; protein N(6)-(lipoyl)lysine from octanoyl-[acyl-carrier-protein]: step 1/2. Its function is as follows. Catalyzes the transfer of endogenously produced octanoic acid from octanoyl-acyl-carrier-protein onto the lipoyl domains of lipoate-dependent enzymes. Lipoyl-ACP can also act as a substrate although octanoyl-ACP is likely to be the physiological substrate. This chain is Octanoyltransferase, found in Nitratidesulfovibrio vulgaris (strain DSM 19637 / Miyazaki F) (Desulfovibrio vulgaris).